Reading from the N-terminus, the 332-residue chain is Mediator of RNA polymerase II transcription subunit 3 (332 aa).

2 disordered regions span residues 125–206 (EPVR…PGAT) and 221–242 (SPLN…TTPS). The segment covering 132 to 143 (SPSYRRPSNRSS) has biased composition (low complexity). Residues 144-153 (ADTPSSNAPT) are compositionally biased toward polar residues. Low complexity-rich tracts occupy residues 155 to 166 (SAAVVSGAALVA) and 184 to 200 (PSVS…SGPA).

Belongs to the Mediator complex subunit 3 family. Component of the Mediator complex.

It localises to the nucleus. In terms of biological role, component of the Mediator complex, a coactivator involved in regulated gene transcription of nearly all RNA polymerase II-dependent genes. Mediator functions as a bridge to convey information from gene-specific regulatory proteins to the basal RNA polymerase II transcription machinery. Mediator is recruited to promoters by direct interactions with regulatory proteins and serves as a scaffold for the assembly of a functional preinitiation complex with RNA polymerase II and the general transcription factors. The protein is Mediator of RNA polymerase II transcription subunit 3 (PGD1) of Eremothecium gossypii (strain ATCC 10895 / CBS 109.51 / FGSC 9923 / NRRL Y-1056) (Yeast).